A 279-amino-acid polypeptide reads, in one-letter code: DegV domain-containing protein SAR1438 (279 aa).

The 275-residue stretch at glutamine 4–lysine 278 folds into the DegV domain. Residues threonine 61 and serine 93 each coordinate hexadecanoate.

May bind long-chain fatty acids, such as palmitate, and may play a role in lipid transport or fatty acid metabolism. The chain is DegV domain-containing protein SAR1438 from Staphylococcus aureus (strain MRSA252).